The following is a 591-amino-acid chain: Mono(ADP-ribosyl)transferase SpvB (591 aa).

The TR mART core domain maps to 373 to 576 (PMMGGNSSRP…LRLSDDATAD (204 aa)). Catalysis depends on residues Arg-471, Ser-501, and Glu-538.

Belongs to the SpvB family.

It localises to the secreted. It catalyses the reaction L-arginyl-[protein] + NAD(+) = N(omega)-(ADP-D-ribosyl)-L-arginyl-[protein] + nicotinamide + H(+). Its function is as follows. Mono-ADP-ribosylates eukaryotic muscle and non-muscle actin on 'Arg-177'. ADP-ribosylation prevents the polymerization of G-actin to F-actin, causing actin filament depolymerization, destruction of the cytoskeleton and cytotoxicity. Does not possess NAD(+)-glycohydrolase activity, unlike most mART enzymes. In Salmonella typhimurium (strain 14028s / SGSC 2262), this protein is Mono(ADP-ribosyl)transferase SpvB (spvB).